The following is a 471-amino-acid chain: MNNHIQTAISEQGIEAYLHAQQHKSLLRFLTCGSVDDGKSTLIGRLLHDSQQIYEDQLKALESDSQKLGTTGEKLDLALLVDGLQAEREQGITIDVAYRYFSTAKRKFIISDTPGHEQYTRNMATGASTCDLAIILIDARKGVLDQTRRHSFIASLLGIKQFVVAVNKMDLVEFSQEVFDRISADYREFAKKLNVDTIQIVPVSALDGDNVVNPSDKLAWYQGETLLSLLESADVERELERHPVRLPVQYVNRPNLDFRGFAGTLAAGILRVGDKLAVLPSGKESTVTRIVTFDGDLEYALPGQAITVTFADEIDISRGDLLVDAAKKPQVTQNVLAHIVWMGEESLQPGRVYDVKLATKKTRGQVEVIRHRIEINKLDQLDASELHLNEIGLCEVSLTDPVAFDPYTDIRDTGSFILIDRLTNVTVGAGMIVEGLAAKAVAGQYSEFEIELNALVRKHFPHWQALAIGKE.

Positions 24 to 240 (KSLLRFLTCG…ESADVERELE (217 aa)) constitute a tr-type G domain. Positions 33 to 40 (GSVDDGKS) are G1. GTP is bound at residue 33–40 (GSVDDGKS). The segment at 91–95 (GITID) is G2. Residues 112–115 (DTPG) are G3. Residues 112 to 116 (DTPGH) and 167 to 170 (NKMD) contribute to the GTP site. The interval 167-170 (NKMD) is G4. Residues 204-206 (SAL) form a G5 region.

Belongs to the TRAFAC class translation factor GTPase superfamily. Classic translation factor GTPase family. CysN/NodQ subfamily. In terms of assembly, heterodimer composed of CysD, the smaller subunit, and CysN.

It carries out the reaction sulfate + ATP + H(+) = adenosine 5'-phosphosulfate + diphosphate. Its pathway is sulfur metabolism; hydrogen sulfide biosynthesis; sulfite from sulfate: step 1/3. Its function is as follows. With CysD forms the ATP sulfurylase (ATPS) that catalyzes the adenylation of sulfate producing adenosine 5'-phosphosulfate (APS) and diphosphate, the first enzymatic step in sulfur assimilation pathway. APS synthesis involves the formation of a high-energy phosphoric-sulfuric acid anhydride bond driven by GTP hydrolysis by CysN coupled to ATP hydrolysis by CysD. This is Sulfate adenylyltransferase subunit 1 from Aeromonas salmonicida (strain A449).